A 111-amino-acid polypeptide reads, in one-letter code: Cytochrome c (111 aa).

Position 1 is an N-acetylalanine (Ala1). Residues Cys22, Cys25, and His26 each coordinate heme c. Position 80 is an N6,N6,N6-trimethyllysine (Lys80). Met88 is a binding site for heme c. Lys94 is subject to N6,N6,N6-trimethyllysine.

Belongs to the cytochrome c family. Binds 1 heme c group covalently per subunit.

It localises to the mitochondrion intermembrane space. Functionally, electron carrier protein. The oxidized form of the cytochrome c heme group can accept an electron from the heme group of the cytochrome c1 subunit of cytochrome reductase. Cytochrome c then transfers this electron to the cytochrome oxidase complex, the final protein carrier in the mitochondrial electron-transport chain. This is Cytochrome c from Vigna radiata var. radiata (Mung bean).